A 71-amino-acid chain; its full sequence is Large ribosomal subunit protein bL31 (71 aa).

Residues cysteine 16, cysteine 18, cysteine 38, and cysteine 41 each contribute to the Zn(2+) site.

Belongs to the bacterial ribosomal protein bL31 family. Type A subfamily. Part of the 50S ribosomal subunit. It depends on Zn(2+) as a cofactor.

Binds the 23S rRNA. The sequence is that of Large ribosomal subunit protein bL31 from Neisseria gonorrhoeae (strain ATCC 700825 / FA 1090).